We begin with the raw amino-acid sequence, 344 residues long: tRNA(Ile)-lysidine synthase (344 aa).

Residue 30–35 (SGGQDS) participates in ATP binding. Positions 323-344 (PPPPAPVPPDPGERSPPPSPLY) are disordered.

This sequence belongs to the tRNA(Ile)-lysidine synthase family.

It localises to the cytoplasm. The catalysed reaction is cytidine(34) in tRNA(Ile2) + L-lysine + ATP = lysidine(34) in tRNA(Ile2) + AMP + diphosphate + H(+). Its function is as follows. Ligates lysine onto the cytidine present at position 34 of the AUA codon-specific tRNA(Ile) that contains the anticodon CAU, in an ATP-dependent manner. Cytidine is converted to lysidine, thus changing the amino acid specificity of the tRNA from methionine to isoleucine. In Thermosynechococcus vestitus (strain NIES-2133 / IAM M-273 / BP-1), this protein is tRNA(Ile)-lysidine synthase.